Reading from the N-terminus, the 241-residue chain is Sugar fermentation stimulation protein homolog (241 aa).

Belongs to the SfsA family.

In Hahella chejuensis (strain KCTC 2396), this protein is Sugar fermentation stimulation protein homolog.